The following is a 510-amino-acid chain: Peroxidase 2 (510 aa).

An N-terminal signal peptide occupies residues 1–19 (MRLTYLPLFAGIAIQSASA). A propeptide spanning residues 20–58 (LPDFFKSSVLKPRRTNSLLINPDAQPDLPTAQQASTAAA) is cleaved from the precursor. Asp228 (proton acceptor) is an active-site residue. His362 provides a ligand contact to heme.

In terms of assembly, homodimer. Requires heme b as cofactor.

In terms of biological role, peroxidase capable of degrading beta-carotene. In Mycetinis scorodonius (Garlic mushroom), this protein is Peroxidase 2.